The primary structure comprises 414 residues: Voltage-gated ClC-type chloride channel ClcB (414 aa).

11 consecutive transmembrane segments (helical) span residues 5 to 25 (LVIS…FHQA), 54 to 74 (ALTP…YQRY), 116 to 136 (SAIG…SVFA), 147 to 167 (LWVA…PLAG), 169 to 189 (LFIA…PVVI), 220 to 240 (VQYF…PLFL), 255 to 275 (LLPP…SLIF), 292 to 312 (TPPG…AVLA), 327 to 347 (LFVG…WPVL), 353 to 373 (LLMA…APIM), and 381 to 401 (MTGE…ATTI).

It belongs to the chloride channel (TC 2.A.49) family. ClcB subfamily.

The protein resides in the cell inner membrane. Functionally, probably acts as an electrical shunt for an outwardly-directed proton pump that is linked to amino acid decarboxylation, as part of the extreme acid resistance (XAR) response. This Yersinia pseudotuberculosis serotype O:1b (strain IP 31758) protein is Voltage-gated ClC-type chloride channel ClcB.